Here is a 108-residue protein sequence, read N- to C-terminus: ATP-dependent Clp protease adapter protein ClpS (108 aa).

The protein belongs to the ClpS family. In terms of assembly, binds to the N-terminal domain of the chaperone ClpA.

Functionally, involved in the modulation of the specificity of the ClpAP-mediated ATP-dependent protein degradation. This Mycobacterium leprae (strain TN) protein is ATP-dependent Clp protease adapter protein ClpS.